A 321-amino-acid polypeptide reads, in one-letter code: PIH1 domain-containing protein 2 (321 aa).

This sequence belongs to the PIH1 family.

This is PIH1 domain-containing protein 2 (pih1d2) from Xenopus tropicalis (Western clawed frog).